Here is a 384-residue protein sequence, read N- to C-terminus: tRNA-specific 2-thiouridylase MnmA (384 aa).

ATP-binding positions include 9-16 (GMSGGVDS) and Met-35. The tract at residues 95-97 (NPD) is interaction with target base in tRNA. The active-site Nucleophile is Cys-100. A disulfide bond links Cys-100 and Cys-196. ATP is bound at residue Gly-124. The segment at 146–148 (KDQ) is interaction with tRNA. Cys-196 functions as the Cysteine persulfide intermediate in the catalytic mechanism. Residues 308–309 (RY) are interaction with tRNA.

It belongs to the MnmA/TRMU family.

Its subcellular location is the cytoplasm. The catalysed reaction is S-sulfanyl-L-cysteinyl-[protein] + uridine(34) in tRNA + AH2 + ATP = 2-thiouridine(34) in tRNA + L-cysteinyl-[protein] + A + AMP + diphosphate + H(+). In terms of biological role, catalyzes the 2-thiolation of uridine at the wobble position (U34) of tRNA, leading to the formation of s(2)U34. In Paraburkholderia phymatum (strain DSM 17167 / CIP 108236 / LMG 21445 / STM815) (Burkholderia phymatum), this protein is tRNA-specific 2-thiouridylase MnmA.